A 196-amino-acid polypeptide reads, in one-letter code: Imidazoleglycerol-phosphate dehydratase (196 aa).

This sequence belongs to the imidazoleglycerol-phosphate dehydratase family.

The protein localises to the cytoplasm. The enzyme catalyses D-erythro-1-(imidazol-4-yl)glycerol 3-phosphate = 3-(imidazol-4-yl)-2-oxopropyl phosphate + H2O. It functions in the pathway amino-acid biosynthesis; L-histidine biosynthesis; L-histidine from 5-phospho-alpha-D-ribose 1-diphosphate: step 6/9. This is Imidazoleglycerol-phosphate dehydratase from Caulobacter sp. (strain K31).